A 224-amino-acid chain; its full sequence is Proline/serine-rich protein C17A5.10 (224 aa).

The segment covering 1–10 (MTDDSVPPPS) has biased composition (pro residues). Residues 1-110 (MTDDSVPPPS…SNYNTAKPPY (110 aa)) are disordered. Low complexity predominate over residues 31–52 (TSTSAGHPSSSSSTLPNYAASS). Composition is skewed to polar residues over residues 53–68 (LNSR…NAYS), 77–94 (PTSQ…STMY), and 101–110 (SNYNTAKPPY).

Belongs to the HUA1 family.

The protein localises to the cytoplasm. Functionally, may be involved in assembly and disassembly of the actin cytoskeleton. The sequence is that of Proline/serine-rich protein C17A5.10 from Schizosaccharomyces pombe (strain 972 / ATCC 24843) (Fission yeast).